A 91-amino-acid chain; its full sequence is MVRSVWKGPFVEGSLLKKADAARASGRHDVIKIWSRRSTILPQFVGLTFGVYNGQKHVPVAVNEEMVGHKFGEFSPTRTFHGHAGDKKAKK.

This sequence belongs to the universal ribosomal protein uS19 family.

Its function is as follows. Protein S19 forms a complex with S13 that binds strongly to the 16S ribosomal RNA. The protein is Small ribosomal subunit protein uS19 of Afipia carboxidovorans (strain ATCC 49405 / DSM 1227 / KCTC 32145 / OM5) (Oligotropha carboxidovorans).